We begin with the raw amino-acid sequence, 91 residues long: Lipolysis-activating peptide 1-alpha chain (91 aa).

The signal sequence occupies residues 1–22 (MMKLVLFGIIVILFSLIGSIHG). The 64-residue stretch at 24 to 87 (SGNYPLNPYG…VWNAVKKHCK (64 aa)) folds into the LCN-type CS-alpha/beta domain. 3 disulfide bridges follow: C38–C61, C47–C66, and C51–C68.

This sequence belongs to the long (3 C-C) scorpion toxin superfamily. In terms of assembly, monomer (edited version) and heterodimer (non-edited version) of this alpha chain and a beta chain (AC P84809). As to expression, expressed by the venom gland.

Its subcellular location is the secreted. The heterodimer non-edited LVP1 induces lipolysis in rat adipocytes. Induction of lipolysis by LVP1 appears to be mediated through the beta-2 adrenergic receptor pathway (ADRB2). Intracerebroventricular injection is not toxic to mice. Functionally, the edited BmKBTx-like, similar to beta-toxins, may modulate voltage-gated sodium channels (Nav) and may block voltage-gated potassium channels (Kv). The protein is Lipolysis-activating peptide 1-alpha chain of Buthus occitanus tunetanus (Common European scorpion).